The chain runs to 239 residues: Small ribosomal subunit protein uS3c (239 aa).

In terms of domain architecture, KH type-2 spans 43–139 (IKNYIQKNRK…RFNISIEKVK (97 aa)). Positions 50–74 (NRKKGSNRKIESDSSSEVITHNRKM) are disordered.

Belongs to the universal ribosomal protein uS3 family. As to quaternary structure, part of the 30S ribosomal subunit.

The protein localises to the plastid. Its subcellular location is the chloroplast. The chain is Small ribosomal subunit protein uS3c (rps3) from Triticum aestivum (Wheat).